Consider the following 173-residue polypeptide: Mesencephalic astrocyte-derived neurotrophic factor homolog (173 aa).

The N-terminal stretch at 1–22 is a signal peptide; the sequence is MNTSHIVLMICFIVGVGQTALA. 4 disulfide bridges follow: cysteine 28–cysteine 114, cysteine 31–cysteine 103, cysteine 61–cysteine 72, and cysteine 148–cysteine 151.

This sequence belongs to the ARMET family.

It is found in the secreted. In terms of biological role, required during the maturation of the embryonic nervous system for maintenance of neuronal and cuticular connectivity. Essential for maintenance of dopaminergic neurons and dopamine levels. This Drosophila virilis (Fruit fly) protein is Mesencephalic astrocyte-derived neurotrophic factor homolog.